We begin with the raw amino-acid sequence, 200 residues long: MIASVRGEVLEIALDHAVIESAGVGYRVNATPATLGGLQRGTEARLVTAMIVREDSMTLYGFPDSESKELFGLLQTVSGVGPRLAMATLAVLEPEALRSALAEGNVTALTRVPGIGKRGAERMVVELRDKVDAVGSTSGAVPLGAGGGGSVRDQIVEALVGLGFPAKQAEQATDSVLAEAPESTTSSALRSALSLLGKTR.

The domain I stretch occupies residues 1–63 (MIASVRGEVL…EDSMTLYGFP (63 aa)). Positions 64–142 (DSESKELFGL…AVGSTSGAVP (79 aa)) are domain II. The interval 142 to 146 (PLGAG) is flexible linker. Residues 147 to 200 (GGGSVRDQIVEALVGLGFPAKQAEQATDSVLAEAPESTTSSALRSALSLLGKTR) are domain III.

Belongs to the RuvA family. In terms of assembly, homotetramer. Forms an RuvA(8)-RuvB(12)-Holliday junction (HJ) complex. HJ DNA is sandwiched between 2 RuvA tetramers; dsDNA enters through RuvA and exits via RuvB. An RuvB hexamer assembles on each DNA strand where it exits the tetramer. Each RuvB hexamer is contacted by two RuvA subunits (via domain III) on 2 adjacent RuvB subunits; this complex drives branch migration. In the full resolvosome a probable DNA-RuvA(4)-RuvB(12)-RuvC(2) complex forms which resolves the HJ.

It is found in the cytoplasm. Functionally, the RuvA-RuvB-RuvC complex processes Holliday junction (HJ) DNA during genetic recombination and DNA repair, while the RuvA-RuvB complex plays an important role in the rescue of blocked DNA replication forks via replication fork reversal (RFR). RuvA specifically binds to HJ cruciform DNA, conferring on it an open structure. The RuvB hexamer acts as an ATP-dependent pump, pulling dsDNA into and through the RuvAB complex. HJ branch migration allows RuvC to scan DNA until it finds its consensus sequence, where it cleaves and resolves the cruciform DNA. The sequence is that of Holliday junction branch migration complex subunit RuvA from Rhodococcus opacus (strain B4).